We begin with the raw amino-acid sequence, 287 residues long: Probable phosphite transport system-binding protein PtxB (287 aa).

The first 23 residues, 1–23, serve as a signal peptide directing secretion; that stretch reads MKRLSALLLTCLLSAVSSLSALA.

This sequence belongs to the phosphate/phosphite/phosphonate binding protein family.

Functionally, probably forms part of a binding-protein-dependent phosphite transporter. Required for oxidation of phosphite to phosphate. This chain is Probable phosphite transport system-binding protein PtxB (ptxB), found in Stutzerimonas stutzeri (Pseudomonas stutzeri).